Reading from the N-terminus, the 341-residue chain is UDP-3-O-acylglucosamine N-acyltransferase (341 aa).

The active-site Proton acceptor is histidine 241.

Belongs to the transferase hexapeptide repeat family. LpxD subfamily. Homotrimer.

It catalyses the reaction a UDP-3-O-[(3R)-3-hydroxyacyl]-alpha-D-glucosamine + a (3R)-hydroxyacyl-[ACP] = a UDP-2-N,3-O-bis[(3R)-3-hydroxyacyl]-alpha-D-glucosamine + holo-[ACP] + H(+). Its pathway is bacterial outer membrane biogenesis; LPS lipid A biosynthesis. In terms of biological role, catalyzes the N-acylation of UDP-3-O-acylglucosamine using 3-hydroxyacyl-ACP as the acyl donor. Is involved in the biosynthesis of lipid A, a phosphorylated glycolipid that anchors the lipopolysaccharide to the outer membrane of the cell. This Christiangramia forsetii (strain DSM 17595 / CGMCC 1.15422 / KT0803) (Gramella forsetii) protein is UDP-3-O-acylglucosamine N-acyltransferase.